We begin with the raw amino-acid sequence, 208 residues long: Sexual inducer glycoprotein (208 aa).

Residues Met-1–Ala-11 form the signal peptide. Asn-89, Asn-119, Asn-131, Asn-139, Asn-146, and Asn-188 each carry an N-linked (GlcNAc...) asparagine glycan.

In terms of biological role, the sexual inducer is a glycoprotein synthesized and released by sexual males at about the time they release sperm packets. It is one of the most potent biological effector molecules known: it exhibits full effectiveness in converting asexually growing males and females to the sexual pathway at about 10(-7) m. In Volvox carteri (Green alga), this protein is Sexual inducer glycoprotein.